The primary structure comprises 357 residues: Alanine racemase (357 aa).

The Proton acceptor; specific for D-alanine role is filled by Lys-33. Lys-33 is modified (N6-(pyridoxal phosphate)lysine). Arg-129 lines the substrate pocket. Tyr-253 functions as the Proton acceptor; specific for L-alanine in the catalytic mechanism. Substrate is bound at residue Met-301.

This sequence belongs to the alanine racemase family. It depends on pyridoxal 5'-phosphate as a cofactor.

The enzyme catalyses L-alanine = D-alanine. Its pathway is amino-acid biosynthesis; D-alanine biosynthesis; D-alanine from L-alanine: step 1/1. Catalyzes the interconversion of L-alanine and D-alanine. May also act on other amino acids. In Pseudomonas entomophila (strain L48), this protein is Alanine racemase (alr).